Here is a 142-residue protein sequence, read N- to C-terminus: MAAAVAAAGAGEPLSPEELVPKAEAEKAEEDLEEDDDDELDETLSERLWGLTEMFPERVRSAAGATFDLSLFVAQKMYRFSRAALWIGTTSFMILVLPVVFETEKLQMEQQQQLQQRQILLGPNTGLSGGMPGALPPLPGKI.

Low complexity predominate over residues 1 to 11 (MAAAVAAAGAG). A disordered region spans residues 1–40 (MAAAVAAAGAGEPLSPEELVPKAEAEKAEEDLEEDDDDEL). Alanine 2 is subject to N-acetylalanine. Over 2–82 (AAAVAAAGAG…VAQKMYRFSR (81 aa)) the chain is Cytoplasmic. Serine 15 bears the Phosphoserine mark. Acidic residues predominate over residues 27–40 (KAEEDLEEDDDDEL). The import sequence; necessary for mitochondrion outer membrane localization and integration in the TOM complex stretch occupies residues 41–50 (DETLSERLWG). Threonine 43 is modified (phosphothreonine). Serine 45 is subject to Phosphoserine. Residues 83-103 (AALWIGTTSFMILVLPVVFET) form a helical membrane-spanning segment. The segment at 83 to 103 (AALWIGTTSFMILVLPVVFET) is TMD; necessary for mitochondrion outer membrane localization and integration in the TOM complex. Residues 104–142 (EKLQMEQQQQLQQRQILLGPNTGLSGGMPGALPPLPGKI) are Mitochondrial intermembrane-facing. The interval 123–142 (PNTGLSGGMPGALPPLPGKI) is C-tail signal; necessary for mitochondrion outer membrane localization and integration in the TOM complex.

This sequence belongs to the Tom22 family. As to quaternary structure, forms part of the preprotein translocase complex of the outer mitochondrial membrane (TOM complex) which consists of at least 7 different proteins (TOMM5, TOMM6, TOMM7, TOMM20, TOMM22, TOMM40 and TOMM70). Interacts with TOMM40. Interacts with PPP2R2B.

The protein resides in the mitochondrion outer membrane. In terms of biological role, central receptor component of the translocase of the outer membrane of mitochondria (TOM complex) responsible for the recognition and translocation of cytosolically synthesized mitochondrial preproteins. Together with the peripheral receptor TOM20 functions as the transit peptide receptor and facilitates the movement of preproteins into the translocation pore. Required for the translocation across the mitochondrial outer membrane of cytochrome P450 monooxygenases. In Rattus norvegicus (Rat), this protein is Mitochondrial import receptor subunit TOM22 homolog (Tomm22).